The sequence spans 306 residues: Curved DNA-binding protein (306 aa).

The J domain occupies Asp-5–Trp-69.

It is found in the cytoplasm. It localises to the nucleoid. DNA-binding protein that preferentially recognizes a curved DNA sequence. It is probably a functional analog of DnaJ; displays overlapping activities with DnaJ, but functions under different conditions, probably acting as a molecular chaperone in an adaptive response to environmental stresses other than heat shock. Lacks autonomous chaperone activity; binds native substrates and targets them for recognition by DnaK. Its activity is inhibited by the binding of CbpM. The sequence is that of Curved DNA-binding protein from Escherichia fergusonii (strain ATCC 35469 / DSM 13698 / CCUG 18766 / IAM 14443 / JCM 21226 / LMG 7866 / NBRC 102419 / NCTC 12128 / CDC 0568-73).